The following is a 612-amino-acid chain: Bifunctional 6(G)-fructosyltransferase/2,1-fructan:2,1-fructan 1-fructosyltransferase (612 aa).

Residues 1–24 (MDAQDIESRHPLIGARPRRRALRS) lie on the Cytoplasmic side of the membrane. Residues 25–45 (LSILLAAALLLGLVLFYANGT) form a helical; Signal-anchor for type II membrane protein membrane-spanning segment. Topologically, residues 46-612 (GSGTAVDPVR…NSTYNDFYHF (567 aa)) are vacuolar. Residues 82-85 (YMND), Gln-101, and Trp-109 contribute to the substrate site. The active site involves Asp-85. N-linked (GlcNAc...) asparagine glycosylation is present at Asn-111. Residues 144–145 (WT) and 208–209 (RD) contribute to the substrate site. 2 N-linked (GlcNAc...) asparagine glycosylation sites follow: Asn-216 and Asn-230. Glu-267 contacts substrate. N-linked (GlcNAc...) asparagine glycosylation is present at Asn-465. Cys-466 and Cys-514 are disulfide-bonded. N-linked (GlcNAc...) asparagine glycans are attached at residues Asn-586 and Asn-603.

The protein belongs to the glycosyl hydrolase 32 family. Post-translationally, might be processed in two N-terminal and C-terminal proteolytic fragments.

It localises to the vacuole membrane. It carries out the reaction [1-beta-D-fructofuranosyl-(2-&gt;1)-]m+1 alpha-D-glucopyranoside + [1-beta-D-fructofuranosyl-(2-&gt;1)-]n+1 alpha-D-glucopyranoside = [1-beta-D-fructofuranosyl-(2-&gt;1)-]m alpha-D-glucopyranoside + [1-beta-D-fructofuranosyl-(2-&gt;1)-]n+1 beta-D-fructofuranosyl-(2-&gt;6)-alpha-D-glucopyranoside (m &gt; 0, n &gt;= 0).. The catalysed reaction is [beta-D-fructosyl-(2-&gt;1)-]m + [beta-D-fructosyl-(2-&gt;1)-]n = [beta-D-fructosyl-(2-&gt;1)-]m-1 + [beta-D-fructosyl-(2-&gt;1)-]n+1.. Involved in the synthesis of fructan of the inulin neoseries. Catalyzes a self-transfer between identical oligosaccharides of the 1-kestose series. The sequence is that of Bifunctional 6(G)-fructosyltransferase/2,1-fructan:2,1-fructan 1-fructosyltransferase from Allium cepa (Onion).